Reading from the N-terminus, the 568-residue chain is Tyrosine-protein kinase transforming protein Src (568 aa).

The tract at residues 1-58 (MGSSKSKPKDPSQRRRSLEPPDSTHHGGFPASQTPNKTAAPDTHRTPSRSFGTVATEP) is disordered. Residue Gly2 is the site of N-myristoyl glycine; by host attachment. The segment covering 7–25 (KPKDPSQRRRSLEPPDSTH) has biased composition (basic and acidic residues). The 62-residue stretch at 81–142 (GGVTTFVALY…PSNYVAPSDS (62 aa)) folds into the SH3 domain. Residues 148-245 (WYFGKITRRE…GLCHRLTNVC (98 aa)) enclose the SH2 domain. The Protein kinase domain occupies 267-520 (LRLEVKLGQG…YLQAFLEDYF (254 aa)). ATP-binding positions include 273 to 281 (LGQGCFGEV) and Lys295. Asp386 acts as the Proton acceptor in catalysis. Phosphotyrosine; by autocatalysis is present on Tyr416.

The protein belongs to the protein kinase superfamily. Tyr protein kinase family. SRC subfamily. In terms of processing, the phosphorylated form is termed pp60v-src.

The enzyme catalyses L-tyrosyl-[protein] + ATP = O-phospho-L-tyrosyl-[protein] + ADP + H(+). In terms of biological role, this phosphoprotein, required for both the initiation and the maintenance of neoplastic transformation, is a protein kinase that catalyzes the phosphorylation of tyrosine residues in vitro. The sequence is that of Tyrosine-protein kinase transforming protein Src (V-SRC) from Galliformes.